The primary structure comprises 86 residues: Gas vesicle protein M (86 aa).

This sequence belongs to the gas vesicle GvpA family. As to quaternary structure, gvpF to GvpM interact with each other in vitro, and may form multi-subunit complex(es). Might interact with GvpA.

It is found in the gas vesicle. Functionally, proteins GvpF to GvpM might be involved in nucleating gas vesicle formation. A minor component of the gas vesicle. Gas vesicles are small, hollow, gas filled protein structures found in some microorganisms. They allow positioning of halobacteria at the optimal depth for growth in the poorly aerated, shallow brine pools of their habitat. Its function is as follows. Expression of a 9.5 kb mc-vac DNA fragment containing 2 divergently transcribed regions (gvpD-gvpE-gvpF-gvpG-gvpH-gvpI-gvpJ-gvpK-gvpL-gvpM and gvpA-gvpC-gvpN-gvpO) allows H.volcanii to produce gas vesicles. This chain is Gas vesicle protein M, found in Haloferax mediterranei (strain ATCC 33500 / DSM 1411 / JCM 8866 / NBRC 14739 / NCIMB 2177 / R-4) (Halobacterium mediterranei).